The primary structure comprises 368 residues: RAB6-interacting golgin (368 aa).

3 disordered regions span residues 1-43 (MAQD…REKA), 55-133 (DGSA…DCKV), and 302-368 (KQMA…AVAT). Residues 11–27 (EELRRLKQNKDPFEPQR) are compositionally biased toward basic and acidic residues. Residues 80-89 (SPSPVAPSPL) show a composition bias toward pro residues. Basic and acidic residues predominate over residues 114-133 (NSHHGHKSAEVRAPKPDCKV). Residues 145–310 (RWEVLQQEQR…AKQMASVERL (166 aa)) adopt a coiled-coil conformation. The tract at residues 188 to 368 (IQKELQALDD…AKNFSAAVAT (181 aa)) is necessary for interaction with RCHY1.

Belongs to the GORAB family. In terms of assembly, interacts with RCHY1. Interacts with SCYL1 and RAB6A/RAB6. Expressed in small intestine, kidney, skeletal muscle, lung, spleen, brain and heart. High expression is observed in osteoblasts and skin; also expressed in osteoclasts albeit at lower levels.

Its subcellular location is the cytoplasm. It localises to the golgi apparatus. The protein is RAB6-interacting golgin (Gorab) of Mus musculus (Mouse).